Here is a 495-residue protein sequence, read N- to C-terminus: Cytochrome P450 2B15 (495 aa).

At serine 129 the chain carries Phosphoserine; by PKA. Cysteine 437 lines the heme pocket.

It belongs to the cytochrome P450 family. Requires heme as cofactor.

Its subcellular location is the endoplasmic reticulum membrane. It localises to the microsome membrane. The catalysed reaction is an organic molecule + reduced [NADPH--hemoprotein reductase] + O2 = an alcohol + oxidized [NADPH--hemoprotein reductase] + H2O + H(+). Cytochromes P450 are a group of heme-thiolate monooxygenases. In liver microsomes, this enzyme is involved in an NADPH-dependent electron transport pathway. It oxidizes a variety of structurally unrelated compounds, including steroids, fatty acids, and xenobiotics. The polypeptide is Cytochrome P450 2B15 (Cyp2b15) (Rattus norvegicus (Rat)).